The primary structure comprises 634 residues: DNA-directed RNA polymerase subunit gamma (634 aa).

Zn(2+)-binding residues include Cys74, Cys76, Cys89, and Cys92. Positions 471, 473, and 475 each coordinate Mg(2+).

This sequence belongs to the RNA polymerase beta' chain family. RpoC1 subfamily. In terms of assembly, in cyanobacteria the RNAP catalytic core is composed of 2 alpha, 1 beta, 1 beta', 1 gamma and 1 omega subunit. When a sigma factor is associated with the core the holoenzyme is formed, which can initiate transcription. Mg(2+) serves as cofactor. The cofactor is Zn(2+).

The enzyme catalyses RNA(n) + a ribonucleoside 5'-triphosphate = RNA(n+1) + diphosphate. Its function is as follows. DNA-dependent RNA polymerase catalyzes the transcription of DNA into RNA using the four ribonucleoside triphosphates as substrates. This Prochlorococcus marinus subsp. pastoris (strain CCMP1986 / NIES-2087 / MED4) protein is DNA-directed RNA polymerase subunit gamma.